A 634-amino-acid polypeptide reads, in one-letter code: CREB-regulated transcription coactivator 1 (634 aa).

A phosphoserine mark is found at S64 and S113. Disordered stretches follow at residues 110 to 174 (RLGS…GSQD), 191 to 221 (TTSE…VPGI), 258 to 331 (LPTP…TLSP), and 357 to 479 (QAGS…HTST). The residue at position 149 (T149) is a Phosphothreonine. At S151 the chain carries Phosphoserine; by SIK1 and SIK2. Over residues 151-174 (SDSALHQSTMTPTQPESFSSGSQD) the composition is skewed to polar residues. A Phosphothreonine modification is found at T161. The segment covering 194-208 (EADKNLSKQAWDTKK) has biased composition (basic and acidic residues). The Nuclear export signal signature appears at 242–258 (TGGSLPDLTNIHFPSPL). 3 stretches are compositionally biased toward polar residues: residues 271-283 (ALSS…NLAA), 296-305 (GMSTPGSSPQ), and 314-331 (LSLS…TLSP). Positions 362 to 397 (QPPPQPQPPPPPPPASQQPPPPPPPQAPVRLPPGGP) are enriched in pro residues. Residues 446–479 (QYRTSAGSPANQSPTSPVSNQGFSPGSSPQHTST) are compositionally biased toward polar residues.

It belongs to the TORC family. Binds, as a tetramer, through its N-terminal region, with the bZIP domain of CREB1. 'Arg-314' in the bZIP domain of CREB1 is essential for this interaction. Interaction, via its C-terminal, with TAF4, enhances recruitment of TAF4 to CREB1. Interacts with 14-3-3 proteins, including YWHAE/14-3-3 epsilon. Interacts with calmodulin-dependent catalytic subunit PPP3CA/calcineurin A. As to quaternary structure, (Microbial infection) Interacts with HTLV1 Tax. Phosphorylation/dephosphorylation states of Ser-151 are required for regulating transduction of CREB activity. TORCs are inactive when phosphorylated, and active when dephosphorylated at this site. This primary site of phosphorylation is mediated by SIKs (SIK1 and SIK2), is regulated by cAMP and calcium levels and is dependent on the phosphorylation of SIKs by LKB1. In terms of tissue distribution, highly expressed in adult and fetal brain. Located to specific regions such as the prefrontal cortex and cerebellum. Very low expression in other tissues such as heart, spleen, lung, skeletal muscle, salivary gland, ovary and kidney.

The protein resides in the cytoplasm. The protein localises to the nucleus. Functionally, transcriptional coactivator for CREB1 which activates transcription through both consensus and variant cAMP response element (CRE) sites. Acts as a coactivator, in the SIK/TORC signaling pathway, being active when dephosphorylated and acts independently of CREB1 'Ser-133' phosphorylation. Enhances the interaction of CREB1 with TAF4. Regulates the expression of specific CREB-activated genes such as the steroidogenic gene, StAR. Potent coactivator of PGC1alpha and inducer of mitochondrial biogenesis in muscle cells. In the hippocampus, involved in late-phase long-term potentiation (L-LTP) maintenance at the Schaffer collateral-CA1 synapses. May be required for dendritic growth of developing cortical neurons. In concert with SIK1, regulates the light-induced entrainment of the circadian clock. In response to light stimulus, coactivates the CREB-mediated transcription of PER1 which plays an important role in the photic entrainment of the circadian clock. (Microbial infection) Plays a role of coactivator for TAX activation of the human T-cell leukemia virus type 1 (HTLV-1) long terminal repeats (LTR). This Homo sapiens (Human) protein is CREB-regulated transcription coactivator 1.